The following is a 292-amino-acid chain: N-acetylneuraminate lyase (292 aa).

Aceneuramate contacts are provided by Ser-47 and Thr-48. Tyr-136 (proton donor) is an active-site residue. Catalysis depends on Lys-164, which acts as the Schiff-base intermediate with substrate. Residues Thr-166, Gly-188, Asp-190, Glu-191, and Ser-207 each coordinate aceneuramate.

The protein belongs to the DapA family. NanA subfamily. In terms of assembly, homotetramer.

It is found in the cytoplasm. It catalyses the reaction aceneuramate = aldehydo-N-acetyl-D-mannosamine + pyruvate. Its pathway is amino-sugar metabolism; N-acetylneuraminate degradation; D-fructose 6-phosphate from N-acetylneuraminate: step 1/5. Its function is as follows. Catalyzes the reversible aldol cleavage of N-acetylneuraminic acid (sialic acid; Neu5Ac) to form pyruvate and N-acetylmannosamine (ManNAc) via a Schiff base intermediate. The chain is N-acetylneuraminate lyase from Actinobacillus pleuropneumoniae serotype 3 (strain JL03).